Consider the following 1558-residue polypeptide: Eukaryotic translation initiation factor 2-alpha kinase 1 (1558 aa).

One can recognise a Protein kinase domain in the interval 429–789 (FFEEKILGCG…AYNLLHESVL (361 aa)). ATP-binding positions include 435–443 (LGCGGFGYV) and lysine 458. The active-site Proton acceptor is the aspartate 660. Residues 1014-1033 (GTSTNNNNNNNNNNMGNNNI) form a disordered region.

Belongs to the protein kinase superfamily. Ser/Thr protein kinase family. GCN2 subfamily. Post-translationally, auto-phosphorylated.

It carries out the reaction L-seryl-[protein] + ATP = O-phospho-L-seryl-[protein] + ADP + H(+). It catalyses the reaction L-threonyl-[protein] + ATP = O-phospho-L-threonyl-[protein] + ADP + H(+). In terms of biological role, in blood stage parasites, phosphorylates translation factor eIF2alpha in response to amino acid starvation. During the asexual blood stage, involved in the response to the host hormone melatonin which is used by the parasite to modulate its cell cycle. The protein is Eukaryotic translation initiation factor 2-alpha kinase 1 of Plasmodium falciparum (isolate 3D7).